We begin with the raw amino-acid sequence, 364 residues long: Chorismate synthase (364 aa).

Positions 41-60 are disordered; that stretch reads MQHDLDRRRPGTSRYTTARR. 2 residues coordinate NADP(+): Arg-48 and Arg-54. FMN-binding positions include 125 to 127, 238 to 239, Gly-278, 293 to 297, and Arg-319; these read RSS, NA, and KPTSS.

This sequence belongs to the chorismate synthase family. Homotetramer. Requires FMNH2 as cofactor.

The catalysed reaction is 5-O-(1-carboxyvinyl)-3-phosphoshikimate = chorismate + phosphate. Its pathway is metabolic intermediate biosynthesis; chorismate biosynthesis; chorismate from D-erythrose 4-phosphate and phosphoenolpyruvate: step 7/7. Functionally, catalyzes the anti-1,4-elimination of the C-3 phosphate and the C-6 proR hydrogen from 5-enolpyruvylshikimate-3-phosphate (EPSP) to yield chorismate, which is the branch point compound that serves as the starting substrate for the three terminal pathways of aromatic amino acid biosynthesis. This reaction introduces a second double bond into the aromatic ring system. In Shewanella baltica (strain OS223), this protein is Chorismate synthase.